The chain runs to 533 residues: Kelch-like protein 33 (533 aa).

Kelch repeat units follow at residues 210–258 (ALVV…ALPA), 273–322 (ELYV…ALDG), 323–369 (KLYA…ILEG), 371–418 (LYVS…ALGG), 419–465 (RLYV…VLQG), and 467–514 (LLVL…ILTL).

This chain is Kelch-like protein 33 (KLHL33), found in Homo sapiens (Human).